The following is a 78-amino-acid chain: Small ribosomal subunit protein uS15c (78 aa).

This sequence belongs to the universal ribosomal protein uS15 family. Part of the 30S ribosomal subunit.

It localises to the plastid. The protein localises to the chloroplast. The protein is Small ribosomal subunit protein uS15c (rps15-A) of Saccharum officinarum (Sugarcane).